The primary structure comprises 591 residues: MKKISLPKIGIRPVIDGRRMGVRESLEEQTMNMAKATAALITEKIRHACGAQVECVIADTCIAGMAESAACEEKFSSQNVGVTITVTPCWCYGSETIDMDPMRPKAIWGFNGTERPGAVYLAAALAAHSQKGIPAFSIYGHDVQDADDTSIPADVEEKLLRFARAGLAVASMKGKSYLSVGGVSMGIAGSIVDHNFFESWLGMKVQAVDMTELRRRIDQKIYDEAELEMALAWADKNFCYGEDQNASQYKRNEAQNRAVLKESLLMAMCIRDMMQGNKTLADKGLVEESLGYNAIAAGFQGQRHWTDQYPNGDTAEALLNSSFDWNGVREPFVVATENDSLNGVAMLFGHQLTGTAQIFADVRTYWSPEAVERITGQALSGLAEHGIIHLINSGSAALDGACKQRDSEGKPTMKPHWEISQQEADACLAATEWCPAIHEYFRGGGYSSRFLTEGGVPFTMTRVNIIKGLGPVLQIAEGWSVELPKAMHDQLDARTNSTWPTTWFAPRLTGKGPFTDVYSVMANWGANHGVLTIGHVGADFITLAAMLRIPVCMHNVEEAKIYRPSAWAAHGMDIEGQDYRACQNYGPLYKR.

Catalysis depends on proton acceptor residues glutamate 337 and aspartate 361. 3 residues coordinate Mn(2+): glutamate 337, aspartate 361, and histidine 528.

Belongs to the L-fucose isomerase family. In terms of assembly, homohexamer. Requires Mn(2+) as cofactor.

Its subcellular location is the cytoplasm. It catalyses the reaction L-fucose = L-fuculose. It participates in carbohydrate degradation; L-fucose degradation; L-lactaldehyde and glycerone phosphate from L-fucose: step 1/3. Its function is as follows. Converts the aldose L-fucose into the corresponding ketose L-fuculose. The protein is L-fucose isomerase of Salmonella choleraesuis (strain SC-B67).